Consider the following 308-residue polypeptide: Testis-specific Y-encoded protein 1 (308 aa).

It belongs to the nucleosome assembly protein (NAP) family. Post-translationally, phosphorylated. Specifically expressed in testicular tissues. Isoform 1 and isoform 2 are expressed in spermatogonia and spermatocytes. Found in early testicular carcinoma in situ, spermatogonial cells in testicular tissues of 46,X,Y female and in prostate cancer cell lines.

It is found in the cytoplasm. Its subcellular location is the nucleus. May be involved in sperm differentiation and proliferation. The polypeptide is Testis-specific Y-encoded protein 1 (TSPY1) (Homo sapiens (Human)).